The following is a 166-amino-acid chain: Protein SprT (166 aa).

The region spanning 20-164 is the SprT-like domain; that stretch reads EHLANANRKL…CVRCGDLLVA (145 aa). His-78 is a binding site for Zn(2+). Glu-79 is an active-site residue. Position 82 (His-82) interacts with Zn(2+).

This sequence belongs to the SprT family. Zn(2+) serves as cofactor.

It localises to the cytoplasm. The protein is Protein SprT of Klebsiella pneumoniae subsp. pneumoniae (strain ATCC 700721 / MGH 78578).